The primary structure comprises 1085 residues: Kinesin-like protein cut7 (1085 aa).

The interval 1–70 (MAPRVAPGGS…TDHALHDENE (70 aa)) is disordered. Polar residues predominate over residues 24-37 (PVSTPNSHFRSASN). Positions 72–421 (NINVVVRVRG…LEYAARAKSI (350 aa)) constitute a Kinesin motor domain. 159–166 (GQTGTGKT) serves as a coordination point for ATP. Coiled-coil stretches lie at residues 436–604 (LIKD…WNLK), 715–740 (ISSE…LRSL), and 897–955 (LALA…DSIK). 2 repeats span residues 987-998 (DESLCNLETTIE) and 999-1010 (DTSLVKLETTGD). Phosphothreonine; by CDC2 is present on T1011. A disordered region spans residues 1049 to 1085 (YTSSNQTNEPDVYDKPSNSSRTSLLRSSRSAYSKMKR). Positions 1065–1078 (SNSSRTSLLRSSRS) are enriched in low complexity.

This sequence belongs to the TRAFAC class myosin-kinesin ATPase superfamily. Kinesin family. BimC subfamily.

The protein localises to the cytoplasm. The protein resides in the cytoskeleton. It localises to the microtubule organizing center. It is found in the spindle pole body. Its function is as follows. Could be a spindle pole body motor. On transition from G2 to M phase of the cell cycle, the spindle pole body duplicates; the daughter pole bodies seed microtubules which interdigitate to form a short spindle that elongates to span the nucleus at metaphase. Mutations at cut7 block spindle formation. In Schizosaccharomyces pombe (strain 972 / ATCC 24843) (Fission yeast), this protein is Kinesin-like protein cut7 (cut7).